The primary structure comprises 600 residues: MADANKAEVPGATGGDSPHLQPAEPPGEPRREPHPAEAEKQQPQHSSSSNGVKMENDESAKEEKSDLKEKSTGSKKANRFHPYSKDKNSGAGEKKGPNRNRVFISNIPYDMKWQAIKDLMREKVGEVTYVELFKDAEGKSRGCGVVEFKDEEFVKKALETMNKYDLSGRPLNIKEDPDGENARRALQRTGGSFPGGHVPDMGSGLMNLPPSILNNPNIPPEVISNLQAGRLGSTIFVANLDFKVGWKKLKEVFSIAGTVKRADIKEDKDGKSRGMGTVTFEQAIEAVQAISMFNGQFLFDRPMHVKMDDKSVPHEEYRSHDGKTPQLPRGLGGIGMGLGPGGQPISASQLNIGGVMGNLGPGGMGMDGPGFGGMNRIGGGIGFGGLEAMNSMGGFGGVGRMGELYRGAMTSSMERDFGRGDIGINQGFGDSFGRLGSAMIGGFAGRIGSSNMGPVGSGISGGMGSMNSVTGGMGMGLDRMSSSFDRMGPGIGAILERSIDMDRGFLSGPMGSGMRERIGSKGNQIFVRNLPFDLTWQKLKEKFSQCGHVMFAEIKMENGKSKGCGTVRFDSPESAEKACRIMNGIKISGREIDVRLDRNA.

The interval 1-101 (MADANKAEVP…GEKKGPNRNR (101 aa)) is disordered. Thr-13 carries the post-translational modification Phosphothreonine. The residue at position 17 (Ser-17) is a Phosphoserine. Residues 27 to 42 (GEPRREPHPAEAEKQQ) show a composition bias toward basic and acidic residues. Lys-53 participates in a covalent cross-link: Glycyl lysine isopeptide (Lys-Gly) (interchain with G-Cter in SUMO2). Basic and acidic residues-rich tracts occupy residues 54 to 72 (MEND…EKST) and 83 to 96 (YSKD…EKKG). RRM domains are found at residues 100–178 (NRVF…EDPD) and 233–310 (STIF…MDDK). Arg-406 is modified (omega-N-methylarginine). A Phosphoserine modification is found at Ser-431. In terms of domain architecture, RRM 3 spans 523–599 (NQIFVRNLPF…REIDVRLDRN (77 aa)).

In terms of assembly, monomer.

It localises to the nucleus. Transcriptional repressor of the myelin basic protein gene (MBP). Binds to the proximal MB1 element 5'-TTGTCC-3' of the MBP promoter. Its binding to MB1 and function are inhibited by PURA. The sequence is that of Myelin expression factor 2 (MYEF2) from Homo sapiens (Human).